A 288-amino-acid polypeptide reads, in one-letter code: Small ribosomal subunit protein uS2 (288 aa).

The tract at residues 255–288 (ANNRDHKNNKNNSTIDNAENLKEENLVGGSNNES) is disordered.

Belongs to the universal ribosomal protein uS2 family.

This chain is Small ribosomal subunit protein uS2, found in Ehrlichia chaffeensis (strain ATCC CRL-10679 / Arkansas).